A 345-amino-acid polypeptide reads, in one-letter code: Phosphoribosylformylglycinamidine cyclo-ligase (345 aa).

Belongs to the AIR synthase family.

It localises to the cytoplasm. It catalyses the reaction 2-formamido-N(1)-(5-O-phospho-beta-D-ribosyl)acetamidine + ATP = 5-amino-1-(5-phospho-beta-D-ribosyl)imidazole + ADP + phosphate + H(+). It participates in purine metabolism; IMP biosynthesis via de novo pathway; 5-amino-1-(5-phospho-D-ribosyl)imidazole from N(2)-formyl-N(1)-(5-phospho-D-ribosyl)glycinamide: step 2/2. The chain is Phosphoribosylformylglycinamidine cyclo-ligase from Myxococcus xanthus (strain DK1622).